We begin with the raw amino-acid sequence, 429 residues long: D-amino acid dehydrogenase (429 aa).

3 to 17 (VLILGSGVIGTTTAW) contacts FAD.

Belongs to the DadA oxidoreductase family. The cofactor is FAD.

The catalysed reaction is a D-alpha-amino acid + A + H2O = a 2-oxocarboxylate + AH2 + NH4(+). It participates in amino-acid degradation; D-alanine degradation; NH(3) and pyruvate from D-alanine: step 1/1. Oxidative deamination of D-amino acids. This Xanthomonas campestris pv. campestris (strain B100) protein is D-amino acid dehydrogenase.